Here is a 397-residue protein sequence, read N- to C-terminus: GTPase Obg (397 aa).

One can recognise an Obg domain in the interval 1–159 (MKFVDEATII…RNLRLELKVL (159 aa)). Residues 128-148 (TRFKSSVNRAPRQTSKGSEGE) are disordered. Residues 129 to 144 (RFKSSVNRAPRQTSKG) show a composition bias toward polar residues. The OBG-type G domain maps to 160 to 333 (ADVGLLGLPN…LVQAVMRWIE (174 aa)). GTP is bound by residues 166 to 173 (GLPNAGKS), 191 to 195 (FTTLV), 213 to 216 (DIPG), 283 to 286 (NKVD), and 314 to 316 (SAL). Residues Ser173 and Thr193 each coordinate Mg(2+). A compositionally biased stretch (acidic residues) spans 336–347 (AEQEADNPDFAE). A disordered region spans residues 336 to 397 (AEQEADNPDF…YDVEVVYAPE (62 aa)). The span at 349-370 (EAARRRRMDEEARQKIEADRQA) shows a compositional bias: basic and acidic residues. A compositionally biased stretch (acidic residues) spans 378-390 (DDDDDFDDDDYDV).

This sequence belongs to the TRAFAC class OBG-HflX-like GTPase superfamily. OBG GTPase family. As to quaternary structure, monomer. Mg(2+) serves as cofactor.

The protein resides in the cytoplasm. An essential GTPase which binds GTP, GDP and possibly (p)ppGpp with moderate affinity, with high nucleotide exchange rates and a fairly low GTP hydrolysis rate. Plays a role in control of the cell cycle, stress response, ribosome biogenesis and in those bacteria that undergo differentiation, in morphogenesis control. This Marinobacter nauticus (strain ATCC 700491 / DSM 11845 / VT8) (Marinobacter aquaeolei) protein is GTPase Obg.